We begin with the raw amino-acid sequence, 404 residues long: G-protein coupled receptor 182 (404 aa).

Topologically, residues 1-57 (MSVKPSWGPGPSEGVTAVPTSDLGEIHNWTELLDLFNHTLSECHVELSQSTKRVVLF) are extracellular. N-linked (GlcNAc...) asparagine glycans are attached at residues Asn-28 and Asn-37. A helical transmembrane segment spans residues 58 to 79 (ALYLAMFVVGLVENLLVICVNW). Over 80 to 90 (RGSGRAGLMNL) the chain is Cytoplasmic. The helical transmembrane segment at 91 to 113 (YILNMAIADLGIVLSLPVWMLEV) threads the bilayer. At 114–127 (TLDYTWLWGSFSCR) the chain is on the extracellular side. A disulfide bridge links Cys-126 with Cys-202. The chain crosses the membrane as a helical span at residues 128–149 (FTHYFYFVNMYSSIFFLVCLSV). The Cytoplasmic portion of the chain corresponds to 150–170 (DRYVTLTSASPSWQRYQHRVR). Residues 171-193 (RAMCAGIWVLSAIIPLPEVVHIQ) traverse the membrane as a helical segment. Topologically, residues 194–217 (LVEGPEPMCLFMAPFETYSTWALA) are extracellular. A helical transmembrane segment spans residues 218–239 (VALSTTILGFLLPFPLITVFNV). Over 240-258 (LTACRLRQPGQPKSRRHCL) the chain is Cytoplasmic. A helical transmembrane segment spans residues 259-280 (LLCAYVAVFVMCWLPYHVTLLL). At 281-299 (LTLHGTHISLHCHLVHLLY) the chain is on the extracellular side. A helical membrane pass occupies residues 300–320 (FFYDVIDCFSMLHCVINPILY). Residues 321–404 (NFLSPHFRGR…ISPTQPLTPS (84 aa)) lie on the Cytoplasmic side of the membrane.

The protein belongs to the G-protein coupled receptor 1 family. As to expression, highly expressed in heart, skeletal muscle, immune system, adrenal gland and liver.

The protein localises to the cell membrane. In terms of biological role, orphan receptor. In Homo sapiens (Human), this protein is G-protein coupled receptor 182 (GPR182).